We begin with the raw amino-acid sequence, 402 residues long: UPF0597 protein THA_1286 (402 aa).

It belongs to the UPF0597 family.

This Thermosipho africanus (strain TCF52B) protein is UPF0597 protein THA_1286.